Reading from the N-terminus, the 158-residue chain is GTP-dependent dephospho-CoA kinase (158 aa).

Residues Asp35, Val36, Asp54, Lys56, Glu109, and Asp132 each coordinate GTP.

Belongs to the GTP-dependent DPCK family.

It carries out the reaction 3'-dephospho-CoA + GTP = GDP + CoA + H(+). Its pathway is cofactor biosynthesis; coenzyme A biosynthesis. Functionally, catalyzes the GTP-dependent phosphorylation of the 3'-hydroxyl group of dephosphocoenzyme A to form coenzyme A (CoA). In Methanococcus maripaludis (strain C7 / ATCC BAA-1331), this protein is GTP-dependent dephospho-CoA kinase.